The primary structure comprises 682 residues: Potassium-transporting ATPase ATP-binding subunit (682 aa).

4 helical membrane passes run 35–55 (VMFIVWVGSLLTTLLAIAMAG), 62–82 (ATFTAAVSIWLWFTVLFANFA), 219–239 (IALTILLIALTLVFLLATATI), and 254–274 (VLVALLVCLIPTTIGGLLSAI). Residue aspartate 307 is the 4-aspartylphosphate intermediate of the active site. ATP-binding positions include aspartate 344, glutamate 348, 377–384 (FTAQTRMS), and lysine 395. Mg(2+)-binding residues include aspartate 518 and aspartate 522. 3 helical membrane passes run 588–608 (FAIIPAAFAAVYPQLAMLNVM), 616–636 (AILSAVIFNALIIVFLIPLAL), and 656–676 (IYGLGGLLVPFIGIKAIDLLL).

The protein belongs to the cation transport ATPase (P-type) (TC 3.A.3) family. Type IA subfamily. The system is composed of three essential subunits: KdpA, KdpB and KdpC.

It is found in the cell inner membrane. It carries out the reaction K(+)(out) + ATP + H2O = K(+)(in) + ADP + phosphate + H(+). Part of the high-affinity ATP-driven potassium transport (or Kdp) system, which catalyzes the hydrolysis of ATP coupled with the electrogenic transport of potassium into the cytoplasm. This subunit is responsible for energy coupling to the transport system and for the release of the potassium ions to the cytoplasm. The sequence is that of Potassium-transporting ATPase ATP-binding subunit from Klebsiella pneumoniae subsp. pneumoniae (strain ATCC 700721 / MGH 78578).